We begin with the raw amino-acid sequence, 108 residues long: Large ribosomal subunit protein eL30 (108 aa).

The protein belongs to the eukaryotic ribosomal protein eL30 family.

The protein is Large ribosomal subunit protein eL30 (rpl30e) of Saccharolobus solfataricus (strain ATCC 35092 / DSM 1617 / JCM 11322 / P2) (Sulfolobus solfataricus).